The primary structure comprises 313 residues: MASVINTNDSALLAQNNLTKSKGILGSAIERLSSGLRINSAKDDAAGQAIANRFTANVKGLTQAARNANDGISIAQTTEGALNEINNNLQRIRELTVQSENGSNSKSDLDSIQKEVTQRLEEIDRISTQTQFNGIKVLNGDVTEMKIQVGANDNETIGIKLGKINSEKLNLKEFSVVEKEAVAAKPAVPAQPAVPADPKNGVAAKPAVPAQPEVKAQEAVKKTDNPLDTLDKALAQVDDMRSSLGAVQNRLESTVNNLNNTVNNLSAARSRIEDADYAVEVSNMSRGQILQQAGTSVLAQANQVPQTVLSLLR.

2 coiled-coil regions span residues 5 to 33 and 97 to 117; these read INTN…ERLS and VQSE…KEVT. 4 repeat units span residues 179–197, 199–217, 255–259, and 262–266. Residues 179-217 form a 2 X 19 AA approximate tandem repeats region; it reads KEAVAAKPAVPAQPAVPADPKNGVAAKPAVPAQPEVKAQ. The span at 190-199 shows a compositional bias: low complexity; sequence AQPAVPADPK. A disordered region spans residues 190–211; the sequence is AQPAVPADPKNGVAAKPAVPAQ. A coiled-coil region spans residues 252 to 298; it reads ESTVNNLNNTVNNLSAARSRIEDADYAVEVSNMSRGQILQQAGTSVL. Positions 255–266 are 2 X 5 AA approximate repeats of V-N-N-L-N; that stretch reads VNNLNNTVNNLS.

Belongs to the bacterial flagellin family.

Its subcellular location is the secreted. It localises to the bacterial flagellum. Its function is as follows. Flagellin is the subunit protein which polymerizes to form the filaments of bacterial flagella. This chain is Flagellin (fliC), found in Xenorhabdus nematophila (Achromobacter nematophilus).